A 362-amino-acid polypeptide reads, in one-letter code: Melatonin receptor type 1B (362 aa).

Topologically, residues 1-42 are extracellular; it reads MSENGSFANCCEAGGWAVRPGWSGAGSARPSRTPRPPWVAPA. Asparagine 4 carries an N-linked (GlcNAc...) asparagine glycan. Residues 43–63 form a helical membrane-spanning segment; sequence LSAVLIVTTAVDVVGNLLVIL. The Cytoplasmic segment spans residues 64–76; sequence SVLRNRKLRNAGN. The helical transmembrane segment at 77–97 threads the bilayer; it reads LFLVSLALADLVVAFYPYPLI. Topologically, residues 98–115 are extracellular; that stretch reads LVAIFYDGWALGEEHCKA. Cysteine 113 and cysteine 190 are joined by a disulfide. A helical transmembrane segment spans residues 116-136; it reads SAFVMGLSVIGSVFNITAIAI. Residues 137–155 are Cytoplasmic-facing; it reads NRYCYICHSMAYHRIYRRW. The chain crosses the membrane as a helical span at residues 156 to 176; that stretch reads HTPLHICLIWLLTVVALLPNF. Residues asparagine 175 and glutamine 194 each contribute to the melatonin site. At 177–200 the chain is on the extracellular side; it reads FVGSLEYDPRIYSCTFIQTASTQY. Residues 201–221 traverse the membrane as a helical segment; the sequence is TAAVVVIHFLLPIAVVSFCYL. Over 222–253 the chain is Cytoplasmic; that stretch reads RIWVLVLQARRKAKPESRLCLKPSDLRSFLTM. A helical membrane pass occupies residues 254–274; the sequence is FVVFVIFAICWAPLNCIGLAV. Topologically, residues 275 to 287 are extracellular; that stretch reads AINPQEMAPQIPE. Residues 288-308 traverse the membrane as a helical segment; that stretch reads GLFVTSYLLAYFNSCLNAIVY. Residues 309-362 lie on the Cytoplasmic side of the membrane; it reads GLLNQNFRREYKRILLALWNPRHCIQDASKGSHAEGLQSPAPPIIGVQHQADAL.

This sequence belongs to the G-protein coupled receptor 1 family. In terms of assembly, interacts with GPR61, GPR62 and GPR135. In terms of tissue distribution, expressed in retina and less in brain and hippocampus.

It localises to the cell membrane. High affinity receptor for melatonin. Likely to mediate the reproductive and circadian actions of melatonin. The activity of this receptor is mediated by pertussis toxin sensitive G proteins that inhibit adenylate cyclase activity. The sequence is that of Melatonin receptor type 1B (MTNR1B) from Homo sapiens (Human).